The following is a 79-amino-acid chain: Small ribosomal subunit protein bS18 (79 aa).

This sequence belongs to the bacterial ribosomal protein bS18 family. Part of the 30S ribosomal subunit. Forms a tight heterodimer with protein bS6.

Its function is as follows. Binds as a heterodimer with protein bS6 to the central domain of the 16S rRNA, where it helps stabilize the platform of the 30S subunit. The protein is Small ribosomal subunit protein bS18 of Streptococcus thermophilus (strain CNRZ 1066).